We begin with the raw amino-acid sequence, 340 residues long: Thermopsin (340 aa).

The first 28 residues, 1 to 28, serve as a signal peptide directing secretion; the sequence is MNFKSICLIILLSALIIPYIPQNIYFFP. The propeptide occupies 29–41; the sequence is HRNTTGATISSGL. Residues asparagine 31, asparagine 65, asparagine 85, asparagine 117, asparagine 148, asparagine 197, asparagine 277, asparagine 287, asparagine 327, and asparagine 334 are each glycosylated (N-linked (GlcNAc...) asparagine).

This sequence belongs to the peptidase A5 family.

Its subcellular location is the secreted. It catalyses the reaction Specificity similar to pepsin A, prefers bulky hydrophobic side-chains on either side of the scissible bond.. May represent a new class of acid proteases. It digests proteins and peptides in acidic solution. The chain is Thermopsin (thpS) from Sulfolobus acidocaldarius (strain ATCC 33909 / DSM 639 / JCM 8929 / NBRC 15157 / NCIMB 11770).